The chain runs to 177 residues: Ribosome maturation factor RimP (177 aa).

Belongs to the RimP family.

The protein localises to the cytoplasm. Required for maturation of 30S ribosomal subunits. The polypeptide is Ribosome maturation factor RimP (Methylibium petroleiphilum (strain ATCC BAA-1232 / LMG 22953 / PM1)).